An 810-amino-acid chain; its full sequence is Lon protease (810 aa).

The 195-residue stretch at 32–226 folds into the Lon N-terminal domain; it reads LPAIAMRSNM…RILDILARET (195 aa). Position 376-383 (376-383) interacts with ATP; that stretch reads GPPGVGKT. The 180-residue stretch at 612-791 folds into the Lon proteolytic domain; it reads KPMIGVTTGL…EEVLEVALNE (180 aa). Residues serine 697 and lysine 740 contribute to the active site.

It belongs to the peptidase S16 family. As to quaternary structure, homohexamer. Organized in a ring with a central cavity.

The protein localises to the cytoplasm. The enzyme catalyses Hydrolysis of proteins in presence of ATP.. ATP-dependent serine protease that mediates the selective degradation of mutant and abnormal proteins as well as certain short-lived regulatory proteins. Required for cellular homeostasis and for survival from DNA damage and developmental changes induced by stress. Degrades polypeptides processively to yield small peptide fragments that are 5 to 10 amino acids long. Binds to DNA in a double-stranded, site-specific manner. This chain is Lon protease, found in Fervidobacterium nodosum (strain ATCC 35602 / DSM 5306 / Rt17-B1).